Consider the following 1570-residue polypeptide: Vacuolar protein sorting/targeting protein 10 (1570 aa).

A signal peptide spans 1–24 (MRIELRSWSSIAFLFTLFIAYVVS). Topologically, residues 25–1390 (ESNFKPDIKL…NKHHGKELNS (1366 aa)) are lumenal. 3 BNR repeats span residues 63–72 (ISFDDGVSWK), 105–116 (YVTNDKGETWSK), and 463–473 (WISRDGGISWD). N503 carries N-linked (GlcNAc...) asparagine glycosylation. BNR repeat units lie at residues 508 to 518 (YFSLDQGKSWE), 801 to 812 (YFSIDGGNTFQK), and 858 to 869 (YITEDGGENFQK). An N-linked (GlcNAc...) asparagine glycan is attached at N1009. BNR repeat units follow at residues 1138 to 1148 (FISRDGGITWK) and 1179 to 1189 (MYSLDEGDTWH). N1299 is a glycosylation site (N-linked (GlcNAc...) asparagine). Residues 1391 to 1411 (GSLLAVIGIPIAVFLLATWFV) form a helical membrane-spanning segment. Topologically, residues 1412–1570 (YERGIRRNGG…ELQSATPEDN (159 aa)) are cytoplasmic. A disordered region spans residues 1517–1570 (EELEEGTNNINEDFNDEPNDYEYEEETNDEVDSRLFNIDDQSDEELQSATPEDN). 2 stretches are compositionally biased toward acidic residues: residues 1529 to 1546 (DFNDEPNDYEYEEETNDE) and 1556 to 1570 (DQSDEELQSATPEDN).

Belongs to the VPS10-related sortilin family.

It is found in the golgi apparatus. The protein resides in the trans-Golgi network membrane. Its subcellular location is the prevacuolar compartment membrane. Its function is as follows. Functions as a sorting receptor in the Golgi compartment required for the intracellular sorting and delivery of soluble vacuolar proteins, like carboxypeptidase Y (CPY) and proteinase A. Executes multiple rounds of sorting by cycling between the late Golgi and a prevacuolar endosome-like compartment. This Debaryomyces hansenii (strain ATCC 36239 / CBS 767 / BCRC 21394 / JCM 1990 / NBRC 0083 / IGC 2968) (Yeast) protein is Vacuolar protein sorting/targeting protein 10 (VPS10).